Reading from the N-terminus, the 428-residue chain is Glutamate-1-semialdehyde 2,1-aminomutase (428 aa).

Lys265 carries the N6-(pyridoxal phosphate)lysine modification.

It belongs to the class-III pyridoxal-phosphate-dependent aminotransferase family. HemL subfamily. Homodimer. Pyridoxal 5'-phosphate is required as a cofactor.

It is found in the cytoplasm. The enzyme catalyses (S)-4-amino-5-oxopentanoate = 5-aminolevulinate. It participates in porphyrin-containing compound metabolism; protoporphyrin-IX biosynthesis; 5-aminolevulinate from L-glutamyl-tRNA(Glu): step 2/2. This is Glutamate-1-semialdehyde 2,1-aminomutase from Vesicomyosocius okutanii subsp. Calyptogena okutanii (strain HA).